A 484-amino-acid chain; its full sequence is Replication factor C large subunit (484 aa).

Gly-46–Thr-53 contributes to the ATP binding site. 3 stretches are compositionally biased toward basic and acidic residues: residues Val-419 to Glu-432, Arg-442 to Lys-451, and Lys-459 to Ala-478. The tract at residues Val-419–Phe-484 is disordered.

Belongs to the activator 1 small subunits family. RfcL subfamily. In terms of assembly, heteromultimer composed of small subunits (RfcS) and large subunits (RfcL).

In terms of biological role, part of the RFC clamp loader complex which loads the PCNA sliding clamp onto DNA. This is Replication factor C large subunit from Methanococcus maripaludis (strain C5 / ATCC BAA-1333).